A 114-amino-acid chain; its full sequence is T cell receptor beta variable 4-2 (114 aa).

The first 21 residues, 1–21 (MGCRLLCCAVLCLLGAVPMET), serve as a signal peptide directing secretion. The 93-residue stretch at 22-114 (GVTQTPRHLV…SALYLCASSQ (93 aa)) folds into the Ig-like domain. Cysteine 42 and cysteine 110 are oxidised to a cystine. 2 N-linked (GlcNAc...) asparagine glycosylation sites follow: asparagine 76 and asparagine 89.

In terms of assembly, alpha-beta TR is a heterodimer composed of an alpha and beta chain; disulfide-linked. The alpha-beta TR is associated with the transmembrane signaling CD3 coreceptor proteins to form the TR-CD3 (TcR or TCR). The assembly of alpha-beta TR heterodimers with CD3 occurs in the endoplasmic reticulum where a single alpha-beta TR heterodimer associates with one CD3D-CD3E heterodimer, one CD3G-CD3E heterodimer and one CD247 homodimer forming a stable octameric structure. CD3D-CD3E and CD3G-CD3E heterodimers preferentially associate with TR alpha and TR beta chains, respectively. The association of the CD247 homodimer is the last step of TcR assembly in the endoplasmic reticulum and is required for transport to the cell surface.

The protein localises to the cell membrane. V region of the variable domain of T cell receptor (TR) beta chain that participates in the antigen recognition. Alpha-beta T cell receptors are antigen specific receptors which are essential to the immune response and are present on the cell surface of T lymphocytes. Recognize peptide-major histocompatibility (MH) (pMH) complexes that are displayed by antigen presenting cells (APC), a prerequisite for efficient T cell adaptive immunity against pathogens. Binding of alpha-beta TR to pMH complex initiates TR-CD3 clustering on the cell surface and intracellular activation of LCK that phosphorylates the ITAM motifs of CD3G, CD3D, CD3E and CD247 enabling the recruitment of ZAP70. In turn ZAP70 phosphorylates LAT, which recruits numerous signaling molecules to form the LAT signalosome. The LAT signalosome propagates signal branching to three major signaling pathways, the calcium, the mitogen-activated protein kinase (MAPK) kinase and the nuclear factor NF-kappa-B (NF-kB) pathways, leading to the mobilization of transcription factors that are critical for gene expression and essential for T cell growth and differentiation. The T cell repertoire is generated in the thymus, by V-(D)-J rearrangement. This repertoire is then shaped by intrathymic selection events to generate a peripheral T cell pool of self-MH restricted, non-autoaggressive T cells. Post-thymic interaction of alpha-beta TR with the pMH complexes shapes TR structural and functional avidity. The polypeptide is T cell receptor beta variable 4-2 (Homo sapiens (Human)).